The following is a 571-amino-acid chain: Quinone-dependent D-lactate dehydrogenase (571 aa).

The region spanning 42-213 (GQGDALAVVF…SKLDDDRIKD (172 aa)) is the FAD-binding PCMH-type domain. FAD contacts are provided by residues 76-80 (AANTG), 84-85 (GS), Gly143, Ser150, Gly160, and Val262. Residues 546–571 (RENDPTNSMNPGIGKTSKRKNWQEVE) are disordered.

It belongs to the quinone-dependent D-lactate dehydrogenase family. The cofactor is FAD.

The protein localises to the cell inner membrane. The catalysed reaction is (R)-lactate + a quinone = a quinol + pyruvate. Its activity is regulated as follows. Inhibited by 2-hydroxy-3-butynoic acid, but not by p-chloromercuribenzoate, n-ethylmaleimide, or 5,5'-dithiobis(2-nitrobenzoic acid). Catalyzes the oxidation of D-lactate to pyruvate. Electrons derived from D-lactate oxidation are transferred to the ubiquinone/cytochrome electron transfer chain, where they may be used to provide energy for the active transport of a variety of amino acids and sugars across the membrane. The polypeptide is Quinone-dependent D-lactate dehydrogenase (Escherichia coli (strain K12)).